A 221-amino-acid polypeptide reads, in one-letter code: Deoxyribose-phosphate aldolase (221 aa).

Residue Asp-90 is the Proton donor/acceptor of the active site. Lys-152 serves as the catalytic Schiff-base intermediate with acetaldehyde. Lys-181 serves as the catalytic Proton donor/acceptor.

It belongs to the DeoC/FbaB aldolase family. DeoC type 1 subfamily.

The protein localises to the cytoplasm. It carries out the reaction 2-deoxy-D-ribose 5-phosphate = D-glyceraldehyde 3-phosphate + acetaldehyde. Its pathway is carbohydrate degradation; 2-deoxy-D-ribose 1-phosphate degradation; D-glyceraldehyde 3-phosphate and acetaldehyde from 2-deoxy-alpha-D-ribose 1-phosphate: step 2/2. In terms of biological role, catalyzes a reversible aldol reaction between acetaldehyde and D-glyceraldehyde 3-phosphate to generate 2-deoxy-D-ribose 5-phosphate. This is Deoxyribose-phosphate aldolase from Syntrophotalea carbinolica (strain DSM 2380 / NBRC 103641 / GraBd1) (Pelobacter carbinolicus).